Here is a 470-residue protein sequence, read N- to C-terminus: Synaptotagmin-17 (470 aa).

Positions 54–112 (PPWLMASRSNDKDGDSVHTASDVPLTPRTNSPDGRRSSSDTSKSTYSLTRRISSLDSRR) are disordered. Positions 92–112 (SDTSKSTYSLTRRISSLDSRR) are enriched in low complexity. Phosphoserine occurs at positions 114 and 115. C2 domains follow at residues 180-306 (QLGM…HWWK) and 317-451 (ELGE…EQWH).

This sequence belongs to the synaptotagmin family.

It localises to the membrane. In terms of biological role, plays a role in dendrite formation by melanocytes. This Mus musculus (Mouse) protein is Synaptotagmin-17 (Syt17).